The chain runs to 129 residues: Glycine cleavage system H protein (129 aa).

The Lipoyl-binding domain occupies 24-106 (EAVVGITEHA…YGAGWLFRIK (83 aa)). N6-lipoyllysine is present on K65.

It belongs to the GcvH family. In terms of assembly, the glycine cleavage system is composed of four proteins: P, T, L and H. Requires (R)-lipoate as cofactor.

The glycine cleavage system catalyzes the degradation of glycine. The H protein shuttles the methylamine group of glycine from the P protein to the T protein. The protein is Glycine cleavage system H protein of Aeromonas salmonicida (strain A449).